We begin with the raw amino-acid sequence, 142 residues long: Hemoglobin subunit alpha (142 aa).

Residues 2–142 (VLSAADKTNV…VSTVLTSKYR (141 aa)) form the Globin domain. A Phosphoserine modification is found at serine 4. Lysine 8 bears the N6-succinyllysine mark. Position 9 is a phosphothreonine (threonine 9). The residue at position 12 (lysine 12) is an N6-succinyllysine. Lysine 17 bears the N6-acetyllysine; alternate mark. An N6-succinyllysine; alternate modification is found at lysine 17. Lysine 41 carries the N6-succinyllysine modification. Residue serine 50 is modified to Phosphoserine. Histidine 59 contributes to the O2 binding site. Heme b is bound at residue histidine 88. At serine 103 the chain carries Phosphoserine. Threonine 109 is modified (phosphothreonine). Serine 125 and serine 132 each carry phosphoserine. 2 positions are modified to phosphothreonine: threonine 135 and threonine 138. Phosphoserine is present on serine 139.

It belongs to the globin family. Heterotetramer of two alpha chains and two beta chains. Red blood cells.

In terms of biological role, involved in oxygen transport from the lung to the various peripheral tissues. Its function is as follows. Hemopressin acts as an antagonist peptide of the cannabinoid receptor CNR1. Hemopressin-binding efficiently blocks cannabinoid receptor CNR1 and subsequent signaling. The polypeptide is Hemoglobin subunit alpha (HBA) (Equus przewalskii (Przewalski's horse)).